Consider the following 581-residue polypeptide: MRFSQLYAPTLKEAPSDADLVSIKLLIRGGFVRKNAAGVYTYLPLGLRVLKKVEQIVREEMAAIGCQEILMPIIQPAELWFESGRWDDYGPEMMKFKDRHERDFTLGPTHEELLTSIVRNELRSYRQFPLSLFQIANKYRDEIRPRFGLIRAREFLMKDAYSFHTDWESLDKAYKDFYKAYGRIMERIGLKYLVVEADTGAIGGDESHEFNALADTGESTLLYCDCGYAASDEKAEYMMLSDEDPDVQEEKALELVETPGVRTVQEVADFLKVTPEQIVKSLLYRGKEGFVMALIRGDQELNESKLKAHLKDQTLTMATLEEVLENFGVPIGFIGPVGMNDKVKIVADFTVKPLRNFVVGGMKEGYHYKGVCLGRDFSVDEWFDLKLAVEGDPCPKCGKPMKMTKGIELGHIFKLGTKYSEKMNGYFTDENGENHPYIMGCYGWGISRTMSAVVEQMHDEHGMIWPLSIAPFHIIITMVNPSQEQISKVGEELYELLKEKYEVLLDDRQASPGVKFKDADLIGIPLRITVGKKLTKGLIELKLRTEKQLVEVSISEGYDSVLETVEKLLKKYDPAKVAEVD.

The protein belongs to the class-II aminoacyl-tRNA synthetase family. ProS type 1 subfamily. Homodimer.

It is found in the cytoplasm. The catalysed reaction is tRNA(Pro) + L-proline + ATP = L-prolyl-tRNA(Pro) + AMP + diphosphate. In terms of biological role, catalyzes the attachment of proline to tRNA(Pro) in a two-step reaction: proline is first activated by ATP to form Pro-AMP and then transferred to the acceptor end of tRNA(Pro). As ProRS can inadvertently accommodate and process non-cognate amino acids such as alanine and cysteine, to avoid such errors it has two additional distinct editing activities against alanine. One activity is designated as 'pretransfer' editing and involves the tRNA(Pro)-independent hydrolysis of activated Ala-AMP. The other activity is designated 'posttransfer' editing and involves deacylation of mischarged Ala-tRNA(Pro). The misacylated Cys-tRNA(Pro) is not edited by ProRS. The protein is Proline--tRNA ligase of Kosmotoga olearia (strain ATCC BAA-1733 / DSM 21960 / TBF 19.5.1).